Consider the following 306-residue polypeptide: Putative HTH-type transcriptional regulatory protein Mhun_2548 (306 aa).

The HTH cro/C1-type domain occupies 132-189; the sequence is LRELRETRSLSLGDLGQILGVSRRTVAKYEAGMGTTIEIALRIEETFDSGVIEPIDLI. The segment at residues 143 to 162 is a DNA-binding region (H-T-H motif); that stretch reads LGDLGQILGVSRRTVAKYEA.

The polypeptide is Putative HTH-type transcriptional regulatory protein Mhun_2548 (Methanospirillum hungatei JF-1 (strain ATCC 27890 / DSM 864 / NBRC 100397 / JF-1)).